The primary structure comprises 491 residues: 1-aminocyclopropane-1-carboxylate synthase (491 aa).

The residue at position 278 (lysine 278) is an N6-(pyridoxal phosphate)lysine.

The protein belongs to the class-I pyridoxal-phosphate-dependent aminotransferase family. Homodimer. It depends on pyridoxal 5'-phosphate as a cofactor.

It carries out the reaction S-adenosyl-L-methionine = 1-aminocyclopropane-1-carboxylate + S-methyl-5'-thioadenosine + H(+). It functions in the pathway alkene biosynthesis; ethylene biosynthesis via S-adenosyl-L-methionine; ethylene from S-adenosyl-L-methionine: step 1/2. Functionally, catalyzes the formation of 1-aminocyclopropane-1-carboxylate, a direct precursor of ethylene in higher plants. The chain is 1-aminocyclopropane-1-carboxylate synthase (ACS1) from Nicotiana tabacum (Common tobacco).